The primary structure comprises 180 residues: Oligoribonuclease (180 aa).

The Exonuclease domain maps to 7–170; the sequence is LIWIDLEMTG…DDIRESIAEL (164 aa). The active site involves tyrosine 128.

Belongs to the oligoribonuclease family.

The protein localises to the cytoplasm. Functionally, 3'-to-5' exoribonuclease specific for small oligoribonucleotides. This Pseudomonas aeruginosa (strain UCBPP-PA14) protein is Oligoribonuclease.